The following is a 240-amino-acid chain: Large ribosomal subunit protein bL25 (240 aa).

The disordered stretch occupies residues 1–23 (MATVKELKATARPKAGKGAARAE). The segment covering 10–19 (TARPKAGKGA) has biased composition (low complexity).

The protein belongs to the bacterial ribosomal protein bL25 family. CTC subfamily. In terms of assembly, part of the 50S ribosomal subunit; part of the 5S rRNA/L5/L18/L25 subcomplex. Contacts the 5S rRNA. Binds to the 5S rRNA independently of L5 and L18.

Functionally, this is one of the proteins that binds to the 5S RNA in the ribosome where it forms part of the central protuberance. The polypeptide is Large ribosomal subunit protein bL25 (Afipia carboxidovorans (strain ATCC 49405 / DSM 1227 / KCTC 32145 / OM5) (Oligotropha carboxidovorans)).